The primary structure comprises 152 residues: Protein-export protein SecB (152 aa).

It belongs to the SecB family. Homotetramer, a dimer of dimers. One homotetramer interacts with 1 SecA dimer.

It localises to the cytoplasm. Functionally, one of the proteins required for the normal export of preproteins out of the cell cytoplasm. It is a molecular chaperone that binds to a subset of precursor proteins, maintaining them in a translocation-competent state. It also specifically binds to its receptor SecA. The sequence is that of Protein-export protein SecB from Acinetobacter baumannii (strain AB307-0294).